The following is a 761-amino-acid chain: ARF GTPase-activating protein GIT1 (761 aa).

Residues 1-124 form the Arf-GAP domain; the sequence is MSRKGPRAEV…AFVHKLPCRD (124 aa). The interval 1 to 124 is interaction with gamma-tubulin and localization to the centrosome; the sequence is MSRKGPRAEV…AFVHKLPCRD (124 aa). A C4-type zinc finger spans residues 11-34; that stretch reads CADCSAPDPGWASISRGVLVCDEC. ANK repeat units follow at residues 132–161, 166–195, and 199–228; these read DLSKQLHSSVRTGNLETCLRLLSLGAQANF, KGTTPLHVAAKAGQTLQAELLVVYGADPGS, and NGRTPIDYARQAGHHELAERLVECQYELTD. The residue at position 224 (Tyr-224) is a Phosphotyrosine. The segment at 245-365 is interaction with PCLO; the sequence is HYIIPQMADS…QGKSLSSPTD (121 aa). Residues 253 to 415 are interaction with PTK2/FAK1; sequence DSLDLSELAK…NRARSMDSSD (163 aa). Positions 254-367 are interaction with ARHGEF7; sequence SLDLSELAKA…KSLSSPTDNL (114 aa). Residues 354-416 form a disordered region; sequence RQQGKSLSSP…RARSMDSSDL (63 aa). The span at 357-374 shows a compositional bias: polar residues; that stretch reads GKSLSSPTDNLELSLRSQ. 2 positions are modified to phosphoserine: Ser-359 and Ser-362. Position 364 is a phosphothreonine (Thr-364). The tract at residues 366-587 is interaction with NCK2 and GRIN3A; the sequence is NLELSLRSQS…QEGSRHTSKL (222 aa). A required for localization at synapses region spans residues 366–587; sequence NLELSLRSQS…QEGSRHTSKL (222 aa). 2 positions are modified to phosphoserine: Ser-370 and Ser-375. Position 383 is a phosphotyrosine (Tyr-383). Phosphoserine is present on residues Ser-385 and Ser-388. Residues 385–394 are compositionally biased toward acidic residues; the sequence is SVASDEDTDQ. At Thr-392 the chain carries Phosphothreonine. Residues Ser-410, Ser-413, and Ser-417 each carry the phosphoserine modification. Residues 411 to 466 are interaction with MAPK1; the sequence is MDSSDLSDGAVTLQEYLELKKALATSEAKVQQLMKVNSSLSDELRRLQREIHKLQA. The interaction with IKBKG stretch occupies residues 420-620; that stretch reads AVTLQEYLEL…EGKRFLELGK (201 aa). The stretch at 440–474 forms a coiled coil; it reads VQQLMKVNSSLSDELRRLQREIHKLQAENLQLRQP. Positions 471–501 are disordered; that stretch reads LRQPPGPVPTPPLPSERAEHTPMAPGGSTHR. Residues 474–484 are compositionally biased toward pro residues; it reads PPGPVPTPPLP. Thr-480 is modified (phosphothreonine). Ser-498 and Ser-536 each carry phosphoserine. The residue at position 537 (Thr-537) is a Phosphothreonine. A phosphotyrosine mark is found at Tyr-545 and Tyr-554. Residues Ser-561, Ser-571, Ser-592, and Ser-596 each carry the phosphoserine modification. A disordered region spans residues 572 to 606; the sequence is PLLSCSQEGSRHTSKLSRHGSGADSDYENTQSGDP. Thr-601 carries the post-translational modification Phosphothreonine. The residue at position 630 (Ser-630) is a Phosphoserine. The interaction with PXN and TGFB1I1 stretch occupies residues 637-761; that stretch reads PGLPSTEDVI…VTITTREKKQ (125 aa).

Forms homodimers and possibly oligomers. May forms heterooligomers with GIT2. Interacts with G protein-coupled receptor kinases, including GRK2, GRK3, GRK5 and GRK6. Interacts with PPFIA1, PPFIA2 and PPFIA4. Interacts with GRIP1 and forms a ternary complex with PPFIA1 and GRIP1. Directly interacts with ARHGEF7/beta-PIX, forming in vitro a heptameric complex made of a GIT1 dimer and an ARHGEF7 trimer. Directly interacts with PXN/paxillin; this interaction is enhanced in the presence of ARHGEF7. Directly interacts (via C-terminus) with TGFB1I1/Hic-5 (via LD motif 3). Directly interacts with PTK2/FAK1. May interact with PTK2B/PYK2; this interaction may be indirect. Interacts with AMPA receptors GRIA2/3. Directly interacts with protein Piccolo/PCLO. Forms a complex with Ephrin-B1/EFNB1 and NCK2/GRB4 (via SH2); this interaction is important for spine morphogenesis and synapse formation. Interaction with NCK2 is transient and depends upon GIT1 phosphorylation at Tyr-383. Interacts with GRIN3A/GluN3A (via C-terminus); this interaction competes with GIT1 interaction with ARHGEF7 and limits synaptic localization of GIT1. Interacts with IKBKG/NEMO in resting bone mesenchymal stem cells, as well as in TNF-stimulated cells; this interaction may increase IKBKG affinity for 'Lys-63'-linked polyubiquitin chains. Interacts with GABA(A) receptors, including GABRB3 and GABRG2. Interacts with SCRIB. Interacts (via N- and C-terminus) with ENTR1/SDCCAG3 (via N-terminus); this interaction is direct. May form a tripartite complex with ENTR1 and PTPN13. Interacts with YWHAZ. Interacts with PAK1. Interacts with PAK3. Directly interacts (via N-terminus) with gamma-tubulin. Interacts with MAPK1 and MAPK3; this interaction is required for MAPK1/3 recruitment to focal adhesions. In terms of processing, phosphorylated by PAK1. Phosphorylation on tyrosine residues may be catalyzed by PTK2/FAK1 and SRC in growing fibroblasts. Phosphorylation at Tyr-383 is induced by activation of Ephrin-B1/EFNB1 and catalyzed by SRC family kinases. It is required for the interaction with NCK2 and for GIT1 recruitment to synapses in hippocampal neurons.

Its subcellular location is the cytoplasm. It localises to the synapse. It is found in the presynapse. The protein resides in the postsynapse. The protein localises to the postsynaptic density. Its subcellular location is the cell junction. It localises to the focal adhesion. It is found in the cell projection. The protein resides in the lamellipodium. The protein localises to the cytoskeleton. Its subcellular location is the microtubule organizing center. It localises to the centrosome. It is found in the spindle pole. Its function is as follows. GTPase-activating protein for ADP ribosylation factor family members, including ARF1. Multidomain scaffold protein that interacts with numerous proteins and therefore participates in many cellular functions, including receptor internalization, focal adhesion remodeling, and signaling by both G protein-coupled receptors and tyrosine kinase receptors. Through PAK1 activation, positively regulates microtubule nucleation during interphase. Plays a role in the regulation of cytokinesis; for this function, may act in a pathway also involving ENTR1 and PTPN13. May promote cell motility both by regulating focal complex dynamics and by local activation of RAC1. May act as scaffold for MAPK1/3 signal transduction in focal adhesions. Recruits MAPK1/3/ERK1/2 to focal adhesions after EGF stimulation via a Src-dependent pathway, hence stimulating cell migration. Plays a role in brain development and function. Involved in the regulation of spine density and synaptic plasticity that is required for processes involved in learning. Plays an important role in dendritic spine morphogenesis and synapse formation. In hippocampal neurons, recruits guanine nucleotide exchange factors (GEFs), such as ARHGEF7/beta-PIX, to the synaptic membrane. These in turn locally activate RAC1, which is an essential step for spine morphogenesis and synapse formation. May contribute to the organization of presynaptic active zones through oligomerization and formation of a Piccolo/PCLO-based protein network, which includes ARHGEF7/beta-PIX and FAK1. In neurons, through its interaction with liprin-alpha family members, may be required for AMPA receptor (GRIA2/3) proper targeting to the cell membrane. In complex with GABA(A) receptors and ARHGEF7, plays a crucial role in regulating GABA(A) receptor synaptic stability, maintaining GPHN/gephyrin scaffolds and hence GABAergic inhibitory synaptic transmission, by locally coordinating RAC1 and PAK1 downstream effector activity, leading to F-actin stabilization. May also be important for RAC1 downstream signaling pathway through PAK3 and regulation of neuronal inhibitory transmission at presynaptic input. Required for successful bone regeneration during fracture healing. The function in intramembranous ossification may, at least partly, exerted by macrophages in which GIT1 is a key negative regulator of redox homeostasis, IL1B production, and glycolysis, acting through the ERK1/2/NRF2/NFE2L2 axis. May play a role in angiogenesis during fracture healing. In this process, may regulate activation of the canonical NF-kappa-B signal in bone mesenchymal stem cells by enhancing the interaction between NEMO and 'Lys-63'-ubiquitinated RIPK1/RIP1, eventually leading to enhanced production of VEGFA and others angiogenic factors. Essential for VEGF signaling through the activation of phospholipase C-gamma and ERK1/2, hence may control endothelial cell proliferation and angiogenesis. The chain is ARF GTPase-activating protein GIT1 (GIT1) from Homo sapiens (Human).